A 796-amino-acid chain; its full sequence is Endonuclease MutS2 (796 aa).

Residue Gly339–Thr346 participates in ATP binding. The tract at residues Glu620–Asp644 is disordered. Residues Leu721 to Lys796 form the Smr domain.

This sequence belongs to the DNA mismatch repair MutS family. MutS2 subfamily. As to quaternary structure, homodimer. Binds to stalled ribosomes, contacting rRNA.

Its function is as follows. Endonuclease that is involved in the suppression of homologous recombination and thus may have a key role in the control of bacterial genetic diversity. In terms of biological role, acts as a ribosome collision sensor, splitting the ribosome into its 2 subunits. Detects stalled/collided 70S ribosomes which it binds and splits by an ATP-hydrolysis driven conformational change. Acts upstream of the ribosome quality control system (RQC), a ribosome-associated complex that mediates the extraction of incompletely synthesized nascent chains from stalled ribosomes and their subsequent degradation. Probably generates substrates for RQC. The chain is Endonuclease MutS2 from Lachnoclostridium phytofermentans (strain ATCC 700394 / DSM 18823 / ISDg) (Clostridium phytofermentans).